The chain runs to 105 residues: Large ribosomal subunit protein uL24 (105 aa).

The protein belongs to the universal ribosomal protein uL24 family. Part of the 50S ribosomal subunit.

Functionally, one of two assembly initiator proteins, it binds directly to the 5'-end of the 23S rRNA, where it nucleates assembly of the 50S subunit. In terms of biological role, one of the proteins that surrounds the polypeptide exit tunnel on the outside of the subunit. This chain is Large ribosomal subunit protein uL24, found in Aeromonas salmonicida (strain A449).